The following is a 2887-amino-acid chain: MVIFAIFYVGRVLGYIVSKAANLVLWKQYRVTVSIQSLVFSPLAGKVHFKNVSVTSQDQLISVLKGTITWRYWLIGRYRRSGTADGARRCRFALKFEGFEYFVYNRNGVYDRIARELDGEDTSAEPTVSVPSVEEVIAELQDDPLIRRFLPVEFLHNKGAIVLGNKQTHSVAIMNYEKLAGTVSIEVPDDTRAPSSFRTEAKISNCTVAIKPNISYEVDNPVKIYVEPKRTARLWKKYKTLLGTVLEATLHAKRKKEQHQTPKWYDNWRGLSMYDVNLDEELDEEVKFDIEHHEYAKCTTVLKADQMDVTYSYGMPGTARVTDSDNAENPLLERPELDHSVDILVYDANCTYGPWANRQVQQCLRVFSPTVCRNFKLRTPEEIAQQTEPAAFKLSVTIMEDSVLRVPMKESSKDAAFLEKYKQTRDETRPFGWIDIRIAKESNITVRMAAYPTENGFENILHANLVDTTISTSVNHDTLLKAKSHDITVDFSYPYGWQDKAEWNFNVCSTQAELFVLRDHVYLISDLVTDFSGGEEVLYEQFRPFDYRFRWDIRGYSAYLNVNDANIINNPIDFGENCYLSVHGDDAEITFSLPITSIIQKYVTVDFNIFTPHFSLFLNAPPWHTFSELLHYKEIGRSKNFNIKGSYTSYSEVDVDNVDALNIACETDYIVVLCYGVILKCMLNVKVNYFGEMVHFRTTEEYVEELQRRNKQNPSTCRPFNSDGNVHDSDVVATESNEIIDASFDAFGGPPTIKKSALKRSINELDVWFTFISKGGCFFFPENIYKFDACLGFYFDNLEASLRFLNYYVDAAVSLDSIYFKRHTDIDARTLFKVIEDIGIPIDASDAYLSQFSFRLHKMLGIMPSEESYACEFDVRVDTLDVHCDLAVLKAFVNTLRNLAFGFKDVENSLQYEREQVFDLNKISCVIENVTVKLQNVDKDEDIWLSLNLPVTTLTSFDLANERYSRRSDLSIPELLFGIYRGDSESTCLGAFSTGVTVTLFERFEQFARCRVLQRKHILVNDAPFHRCSFMLPPEYKKMPIYRSLYGCIPPSSSLPLFPEPISADNFEVIFEKLLGEIYQEYASDSSYQITDDSISSTEHDYHNQTVNAAIGTSSSLFIRSQNHQQTLSSFIVEFDPIDGYLDLSATEFMLEIYKYLTEVSLDEAIDSLEIGIINQFIQTFGEDNGISEVRVLCPNISLSATNKQSKFSMFKLSSKIKNLDITSRIKSSDPNLKPDPEKTTLCYKIDYIRANIVQDGIVVPPKQPSQLFSCSIELLEGYLSYDKLSLLDNNVQSCSVTLSPGTDKLLFEFLNPFISTFDLLQRELSSFEDTLLASKREFLLNILRGGRDYEIQHDPPVITKPANITRFSNRHIRSAESWRIIMRLRHILNYLPQEWHQSFTRHLGTQDFTSPEEAGKEFLSIFSDWRSWEPTDVQGSFVHEKVFTKKRSRPFAALQGFTFSSDDIRLNMKDDARVPITVKGVTLGIRNNGLAPEQVDGRTEGSMPDPDYISFCTTDEVVMRVDRSFVKTLKEFRDLIHRFKIGGPVGTAKHDNVSLFSNITFQFGKLYVVAKLAGVYLRICLDNLSALMLTSQSSVESKVISSSTLSFDHMQAILGYRSFRFMTIDIDMFSVLLHYLPGQGCYSIDWKARKFHIDSSSATTKDLTESLPYVRDEIKYLVEALVPELFAEPPIERESSGNKIHAVLFQGQVANITLKLQILSPFIILYCAENFELQAESTDSVIFDLNSGESYMEISSAKQKLDYFKYTHTCLKLSGTSSSARLFEHISCDIGILKLSVFDLKTRITDLLQDIKAALFSMKSLSDILNISQSSPTASAFGSWFSILPDNLSLQATYAGLLLGFGHTLYILEFNNFEAKHTRDGLPDAITPRPCFKVDHSIESASFLIKDRRIDDRLAKVVDFAVNFNMVHDTDLCIQSVQIESTHLKITLAPMTVVRLLSLINEFGIIRKQFTEESIYTPSSAHNNSTATECLEPSVWRLIIKSGHILSHDFSIVWLFDIPNSSADGLICGYDRLFSVYEKPYGKLTLLNAYFSAAKILASEADFYSSVVRKQRINTSYLSDMQLRYWFTEDSENTDLFIRIHGAKLAVDISAEIVTLLEETIQSIQTFNNLKKALVDPFRTKKQDSDISKEPYNWNNQLATGVRSLNCIINYAGVTLKLHSHDGRGDASPLELTSPSYKVAIDYKYFPNLEKTHRFRTLITATPTHNTFYSTSAFLIHDLCYRFSKLLKTSSTENKSSSASTSSSIKVEGSDNSTLLGSIDLVIILNVGKQEVTFSCEPKAKVQATVGFEKFDIKIFNNNINDEESLCLAIEIENLMTNSRHIYSREVCASLKLRHISMVFDIMGSQVRRIYGSTLISSPLFYFNMKQLQDLKLFIDQWFPQKTPMNTGSYPEGVLVDDISRSIGSKFYKGSSSSSFTWGYSVIVAGSCAEIELGPSLGVLNVTSEDVWAISKQQVDWSQQLDLNMGKLDVTSSGRLGGNFLVRNAHLSLELKWPNPKDFFQVPLVCVKLGSDTVDTKLSFDYHTFFISSLKQGYASLFNERDEDGSLADLLSVTVSFESVNIFLTALAAANISDIKNSITRLKKDNELSYLSSFLASDQPSDEPEEDGGIFDTLSLLRTQLSLNLGVFRLQISPTSLFDSDVLILTATKMMANTGIQADIKIKTDLHWQLDDVSLALLPFNNSLDESYLATMEVGKYIELSSTIQGGAIFSAPSIVVNMTTWQEPQSNVIELLYSTSFGGTVKIRWNLGPISFIKDMWQAHMNAMQLREGYYHGLAESGVAVTPLNSKAVPLEMHLGSDYQYLPLQEPDIEMPRIKDLGDATPPIEWFGVNRTKFPGFTHQFVIVPLQKLARTAEKEYEKILGRAL.

M1 is a topological domain (cytoplasmic). A helical; Signal-anchor for type II membrane protein membrane pass occupies residues 2-22 (VIFAIFYVGRVLGYIVSKAAN). The Extracellular portion of the chain corresponds to 23–2887 (LVLWKQYRVT…EYEKILGRAL (2865 aa)). Residues N51, N205, N213, N349, N443, N929, N1104, N1196, N1364, N1553, N1559, N1584, N1712, N1827, N1848, N1984, N1985, N2021, N2075, N2255, N2273, N2462, N2592, N2702, N2739, and N2852 are each glycosylated (N-linked (GlcNAc...) asparagine).

It belongs to the CSF1 family.

Its subcellular location is the membrane. Its function is as follows. Required for the glucose and other nutrients uptake at low temperature. The sequence is that of Protein CSF1 (CSF1) from Eremothecium gossypii (strain ATCC 10895 / CBS 109.51 / FGSC 9923 / NRRL Y-1056) (Yeast).